A 303-amino-acid polypeptide reads, in one-letter code: N-acetyl-D-glucosamine kinase (303 aa).

ATP contacts are provided by residues 4–11 and 133–140; these read GFDMGGTK and GVGGGLIV. 4 residues coordinate Zn(2+): His-157, Cys-177, Cys-179, and Cys-184.

It belongs to the ROK (NagC/XylR) family. NagK subfamily.

It catalyses the reaction N-acetyl-D-glucosamine + ATP = N-acetyl-D-glucosamine 6-phosphate + ADP + H(+). The protein operates within cell wall biogenesis; peptidoglycan recycling. Catalyzes the phosphorylation of N-acetyl-D-glucosamine (GlcNAc) derived from cell-wall degradation, yielding GlcNAc-6-P. The chain is N-acetyl-D-glucosamine kinase from Yersinia enterocolitica serotype O:8 / biotype 1B (strain NCTC 13174 / 8081).